The chain runs to 612 residues: Dihydroxy-acid dehydratase (612 aa).

Asp-81 serves as a coordination point for Mg(2+). Cys-122 contacts [2Fe-2S] cluster. The Mg(2+) site is built by Asp-123 and Lys-124. N6-carboxylysine is present on Lys-124. Cys-193 is a [2Fe-2S] cluster binding site. Glu-489 is a binding site for Mg(2+). Ser-515 functions as the Proton acceptor in the catalytic mechanism.

The protein belongs to the IlvD/Edd family. As to quaternary structure, homodimer. Requires [2Fe-2S] cluster as cofactor. The cofactor is Mg(2+).

The enzyme catalyses (2R)-2,3-dihydroxy-3-methylbutanoate = 3-methyl-2-oxobutanoate + H2O. It catalyses the reaction (2R,3R)-2,3-dihydroxy-3-methylpentanoate = (S)-3-methyl-2-oxopentanoate + H2O. The protein operates within amino-acid biosynthesis; L-isoleucine biosynthesis; L-isoleucine from 2-oxobutanoate: step 3/4. It functions in the pathway amino-acid biosynthesis; L-valine biosynthesis; L-valine from pyruvate: step 3/4. Its function is as follows. Functions in the biosynthesis of branched-chain amino acids. Catalyzes the dehydration of (2R,3R)-2,3-dihydroxy-3-methylpentanoate (2,3-dihydroxy-3-methylvalerate) into 2-oxo-3-methylpentanoate (2-oxo-3-methylvalerate) and of (2R)-2,3-dihydroxy-3-methylbutanoate (2,3-dihydroxyisovalerate) into 2-oxo-3-methylbutanoate (2-oxoisovalerate), the penultimate precursor to L-isoleucine and L-valine, respectively. The polypeptide is Dihydroxy-acid dehydratase (Xanthomonas axonopodis pv. citri (strain 306)).